A 725-amino-acid polypeptide reads, in one-letter code: MFDVQREELLWGGRKLVLETGKVARQADGAVVASYGETTVLATVVSLKEPKPGIDFLPLTVNYQERAYAAGRIPGGYFKREGRPSEKETLVSRLIDRPIRPLFVEGWRNDTQVVVTVLSHDLENDPDIVSMVAASAALTLSGVPFMGPIGAARVGYVGNQYKLNPTIQEMEGSSLDLVVAGTEAAVLMVESEAKELPEDVMLGAVMFGHKHFQPVIEAIIRLAEKAAKEPRDFQPTDLSEVEKAVLEIGEADLREAYKKTVKQERYAAVDAVKAKVMAALAPEEGEAKFEPETVKAAFKEVQAKVVRWNILDTGSRIDGRDVRTVRPILSEVGVLPRAHGSALFTRGETQALVVATLGTGDDEQFIDALEGTYKETFLLHYNFPPYSVGETGRMGSPGRREIGHGKLAWRAVHPLLPAAHEFPYTIRVVSEITESNGSSSMATVCGSSLALMDAGVPLRRPVAGIAMGLILEGERFAVLSDILGDEDHLGDMDFKVAGTSEGVTSLQMDIKIAGITEEIMRVALDQAKDGRAHILGEMAKALTAARPELGEHAPRIETMQIPTDKIREVIGTGGKVIREIVEKTGAKIDIQDTGVIKIASSDAKAIKAAYNWIRSIVAEPEAGMIYDGTVVKTMEFGAFINFFGAKDGLVHISELAPQRVAKVTDVVKEGDKVKVKFLGQDERGKIRLSMKVVDQQTGEDITEKLKAEREADRNRERQARQSAGE.

Residues Asp487 and Asp493 each contribute to the Mg(2+) site. Residues 554 to 613 (PRIETMQIPTDKIREVIGTGGKVIREIVEKTGAKIDIQDTGVIKIASSDAKAIKAAYNWI) enclose the KH domain. Residues 623 to 691 (GMIYDGTVVK…ERGKIRLSMK (69 aa)) form the S1 motif domain. The disordered stretch occupies residues 697 to 725 (TGEDITEKLKAEREADRNRERQARQSAGE). The segment covering 701–719 (ITEKLKAEREADRNRERQA) has biased composition (basic and acidic residues).

It belongs to the polyribonucleotide nucleotidyltransferase family. Requires Mg(2+) as cofactor.

It is found in the cytoplasm. The catalysed reaction is RNA(n+1) + phosphate = RNA(n) + a ribonucleoside 5'-diphosphate. Functionally, involved in mRNA degradation. Catalyzes the phosphorolysis of single-stranded polyribonucleotides processively in the 3'- to 5'-direction. This is Polyribonucleotide nucleotidyltransferase from Methylobacterium nodulans (strain LMG 21967 / CNCM I-2342 / ORS 2060).